Reading from the N-terminus, the 671-residue chain is Probable potassium transport system protein Kup (671 aa).

A disordered region spans residues 1–43; the sequence is MSQIPSPNDPASTGAAPSSAAVPAGPSATPAPSPTAGFSLPGH. A compositionally biased stretch (low complexity) spans 10 to 37; the sequence is PASTGAAPSSAAVPAGPSATPAPSPTAG. Transmembrane regions (helical) follow at residues 52 to 72, 92 to 112, 147 to 167, 181 to 201, 209 to 229, 255 to 275, 291 to 311, 323 to 343, 381 to 401, 407 to 427, 441 to 461, and 465 to 485; these read LAAL…TSPL, VLGV…FKYM, LMLG…TPAI, PAME…LFLF, VGAV…VLGV, GWHG…GEAL, WLGL…ALLL, LLAP…AAIV, IYLP…VLGF, LASA…LLFH, AWPL…ANVV, and DGGW…STWK.

Belongs to the HAK/KUP transporter (TC 2.A.72) family.

It is found in the cell inner membrane. It catalyses the reaction K(+)(in) + H(+)(in) = K(+)(out) + H(+)(out). Transport of potassium into the cell. Likely operates as a K(+):H(+) symporter. This chain is Probable potassium transport system protein Kup, found in Anaeromyxobacter dehalogenans (strain 2CP-1 / ATCC BAA-258).